The primary structure comprises 153 residues: Biogenesis of lysosome-related organelles complex 1 subunit 1 (153 aa).

Over residues methionine 1–serine 11 the composition is skewed to basic and acidic residues. Residues methionine 1–valine 27 are disordered. Positions valine 27–alanine 59 form a coiled coil.

The protein belongs to the BLOC1S1 family. In terms of assembly, component of the biogenesis of lysosome-related organelles complex 1 (BLOC-1) composed of BLOC1S1, BLOC1S2, BLOC1S3, BLOC1S4, BLOC1S5, BLOC1S6, DTNBP1/BLOC1S7 and SNAPIN/BLOC1S8. Octamer composed of one copy each BLOC1S1, BLOC1S2, BLOC1S3, BLOC1S4, BLOC1S5, BLOC1S6, DTNBP1/BLOC1S7 and SNAPIN/BLOC1S8. The BLOC-1 complex associates with the AP-3 protein complex and membrane protein cargos. Component of the BLOC-one-related complex (BORC) which is composed of BLOC1S1, BLOC1S2, BORCS5, BORCS6, BORCS7, BORCS8, KXD1 and SNAPIN. Interacts with ATP5F1A and NDUFA9; involved in their acetylation on lysine residues. Interacts with KXD1.

The protein localises to the mitochondrion intermembrane space. The protein resides in the mitochondrion matrix. It localises to the cytoplasm. Its subcellular location is the cytosol. It is found in the lysosome membrane. The catalysed reaction is L-lysyl-[protein] + acetyl-CoA = N(6)-acetyl-L-lysyl-[protein] + CoA + H(+). In terms of biological role, component of the BLOC-1 complex, a complex that is required for normal biogenesis of lysosome-related organelles (LRO), such as platelet dense granules and melanosomes. In concert with the AP-3 complex, the BLOC-1 complex is required to target membrane protein cargos into vesicles assembled at cell bodies for delivery into neurites and nerve terminals. The BLOC-1 complex, in association with SNARE proteins, is also proposed to be involved in neurite extension. As part of the BORC complex may play a role in lysosomes movement and localization at the cell periphery. Associated with the cytosolic face of lysosomes, the BORC complex may recruit ARL8B and couple lysosomes to microtubule plus-end-directed kinesin motor. Its function is as follows. Acts as a protein acetyltransferase. Negatively regulates aerobic respiration through mitochondrial protein lysine-acetylation. May counteract the action of the deacetylase SIRT3 by acetylating and regulating proteins of the mitochondrial respiratory chain including ATP5F1A and NDUFA9. Acts as a regulator of mTORC2 signaling in response to hypotoxic stress by mediating acetylation of RICTOR, thereby protecting RICTOR against ubiquitination and subsequent degradation by the proteasome. The protein is Biogenesis of lysosome-related organelles complex 1 subunit 1 (BLOC1S1) of Homo sapiens (Human).